Reading from the N-terminus, the 313-residue chain is Holliday junction branch migration complex subunit RuvB (313 aa).

Positions 1–157 (MNEYIGQGNI…FGLIMELDFY (157 aa)) are large ATPase domain (RuvB-L). ATP is bound by residues Gly38, Lys41, Thr42, Thr43, 104 to 106 (EDF), Arg147, Tyr157, and Arg194. Thr42 lines the Mg(2+) pocket. Positions 158–228 (SIDELSKIIE…MVEEIMFLLG (71 aa)) are small ATPAse domain (RuvB-S). Residues 231 to 313 (KEGLDELDRK…KVQRGLFDEE (83 aa)) are head domain (RuvB-H). Residues Arg286 and Arg291 each coordinate DNA.

The protein belongs to the RuvB family. Homohexamer. Forms an RuvA(8)-RuvB(12)-Holliday junction (HJ) complex. HJ DNA is sandwiched between 2 RuvA tetramers; dsDNA enters through RuvA and exits via RuvB. An RuvB hexamer assembles on each DNA strand where it exits the tetramer. Each RuvB hexamer is contacted by two RuvA subunits (via domain III) on 2 adjacent RuvB subunits; this complex drives branch migration. In the full resolvosome a probable DNA-RuvA(4)-RuvB(12)-RuvC(2) complex forms which resolves the HJ.

The protein resides in the cytoplasm. It catalyses the reaction ATP + H2O = ADP + phosphate + H(+). Functionally, the RuvA-RuvB-RuvC complex processes Holliday junction (HJ) DNA during genetic recombination and DNA repair, while the RuvA-RuvB complex plays an important role in the rescue of blocked DNA replication forks via replication fork reversal (RFR). RuvA specifically binds to HJ cruciform DNA, conferring on it an open structure. The RuvB hexamer acts as an ATP-dependent pump, pulling dsDNA into and through the RuvAB complex. RuvB forms 2 homohexamers on either side of HJ DNA bound by 1 or 2 RuvA tetramers; 4 subunits per hexamer contact DNA at a time. Coordinated motions by a converter formed by DNA-disengaged RuvB subunits stimulates ATP hydrolysis and nucleotide exchange. Immobilization of the converter enables RuvB to convert the ATP-contained energy into a lever motion, pulling 2 nucleotides of DNA out of the RuvA tetramer per ATP hydrolyzed, thus driving DNA branch migration. The RuvB motors rotate together with the DNA substrate, which together with the progressing nucleotide cycle form the mechanistic basis for DNA recombination by continuous HJ branch migration. Branch migration allows RuvC to scan DNA until it finds its consensus sequence, where it cleaves and resolves cruciform DNA. The protein is Holliday junction branch migration complex subunit RuvB of Thermosipho melanesiensis (strain DSM 12029 / CIP 104789 / BI429).